The following is a 100-amino-acid chain: Large ribosomal subunit protein bL28 (100 aa).

Belongs to the bacterial ribosomal protein bL28 family.

This is Large ribosomal subunit protein bL28 from Methylobacterium radiotolerans (strain ATCC 27329 / DSM 1819 / JCM 2831 / NBRC 15690 / NCIMB 10815 / 0-1).